A 194-amino-acid chain; its full sequence is Putative adenylate kinase (194 aa).

Residues Gly16, Gly18, Lys19, Thr20, and Thr21 each coordinate ATP. The interval 36-59 (SVGELLAGTPYVTYIPELDTYEIV) is NMP. The segment at 108–118 (RRGWPLKKILD) is LID. Residue Arg109 coordinates ATP.

It belongs to the adenylate kinase family. AK6 subfamily. As to quaternary structure, interacts with uS11. Not a structural component of 40S pre-ribosomes, but transiently interacts with them by binding to uS11.

The enzyme catalyses AMP + ATP = 2 ADP. It carries out the reaction ATP + H2O = ADP + phosphate + H(+). Functionally, broad-specificity nucleoside monophosphate (NMP) kinase that catalyzes the reversible transfer of the terminal phosphate group between nucleoside triphosphates and monophosphates. Also has ATPase activity. Involved in the late maturation steps of the 30S ribosomal particles, specifically 16S rRNA maturation. While NMP activity is not required for ribosome maturation, ATPase activity is. Associates transiently with small ribosomal subunit protein uS11. ATP hydrolysis breaks the interaction with uS11. May temporarily remove uS11 from the ribosome to enable a conformational change of the ribosomal RNA that is needed for the final maturation step of the small ribosomal subunit. This chain is Putative adenylate kinase, found in Pyrobaculum aerophilum (strain ATCC 51768 / DSM 7523 / JCM 9630 / CIP 104966 / NBRC 100827 / IM2).